We begin with the raw amino-acid sequence, 599 residues long: MKHIRNFSIIAHIDHGKSTLSDRIIQICGGLSEREMAAQVLDSMDLERERGITIKAQSVTLDYHSKDGQTYQLNFIDTPGHVDFSYEVSRSLAACEGALLVVDAGQGVEAQTLANCYTAMEMDLEVVPVLNKIDLPAADPERVAEEIEDIVGIDATDAIRCSAKTGVGVPDVLERLVRDIPAPEGDPNGPLQALIIDSWFDNYLGVVSLIRIKNGSLRKGDKVKVMSTGQSYNADRLGIFTPKRVDRDVLNCGEVGWLVCAIKDILGAPVGDTLTLTRNPAEKSLPGFKKVKPQVYAGLFPISSDDYESFRDALGKLSLNDASLFYEPESSTALGFGFRCGFLGLLHMEIIQERLEREYDLELITTAPTVVYEVITTNQETVYVDSPSKLPALNNIEELREPIAECHMLLPQEYLGNVITLCIEKRGTQTNMVYHGKQVALTYEIPMAEVVLDFFDRLKSTSRGYASLDYNFKRFQTSDMVRVDVLINNERVDALALITHRDNAQYRGRDLVEKMKELIPRQQFDIAIQAAIGNHIIARSTVKQLRKNVLAKCYGGDVSRKKKLLQKQKDGKKRMKQVGNVELPQEAFLAILHVGKDSK.

The 183-residue stretch at lysine 2–glutamate 184 folds into the tr-type G domain. GTP contacts are provided by residues aspartate 14–threonine 19 and asparagine 131–aspartate 134.

The protein belongs to the TRAFAC class translation factor GTPase superfamily. Classic translation factor GTPase family. LepA subfamily.

It is found in the cell inner membrane. It catalyses the reaction GTP + H2O = GDP + phosphate + H(+). In terms of biological role, required for accurate and efficient protein synthesis under certain stress conditions. May act as a fidelity factor of the translation reaction, by catalyzing a one-codon backward translocation of tRNAs on improperly translocated ribosomes. Back-translocation proceeds from a post-translocation (POST) complex to a pre-translocation (PRE) complex, thus giving elongation factor G a second chance to translocate the tRNAs correctly. Binds to ribosomes in a GTP-dependent manner. The protein is Elongation factor 4 of Yersinia pestis bv. Antiqua (strain Antiqua).